Here is a 258-residue protein sequence, read N- to C-terminus: Ribosomal RNA large subunit methyltransferase E (258 aa).

The S-adenosyl-L-methionine site is built by glycine 58, tryptophan 60, aspartate 78, aspartate 96, and aspartate 120. Residue lysine 160 is the Proton acceptor of the active site.

This sequence belongs to the class I-like SAM-binding methyltransferase superfamily. RNA methyltransferase RlmE family.

It is found in the cytoplasm. It carries out the reaction uridine(2552) in 23S rRNA + S-adenosyl-L-methionine = 2'-O-methyluridine(2552) in 23S rRNA + S-adenosyl-L-homocysteine + H(+). Specifically methylates the uridine in position 2552 of 23S rRNA at the 2'-O position of the ribose in the fully assembled 50S ribosomal subunit. This chain is Ribosomal RNA large subunit methyltransferase E, found in Methanococcus maripaludis (strain C7 / ATCC BAA-1331).